Here is a 1093-residue protein sequence, read N- to C-terminus: TATA element modulatory factor (1093 aa).

Disordered stretches follow at residues 38–80 (WAET…SPKA) and 108–189 (TIQK…DMKV). Positions 51-70 (SPVSGGWDTSTWGLKSNTEP) are enriched in polar residues. Phosphoserine is present on residues Ser72, Ser77, Ser112, and Ser136. Over residues 123–137 (QRPEEEVKSSLHESL) the composition is skewed to basic and acidic residues. Residues 139 to 158 (IGQSRTPETTESQVKDSSLC) show a composition bias toward polar residues. Over residues 173-187 (TEGKHEETVNKESDM) the composition is skewed to basic and acidic residues. 2 positions are modified to phosphoserine: Ser199 and Ser217. Basic and acidic residues predominate over residues 229–238 (PKEQKHEDRQ). 2 disordered regions span residues 229 to 260 (PKEQKHEDRQSNTPSPPVSTFSSGTSTTSDIE) and 266 to 285 (SVISESSASSRQETTDSKSS). Over residues 246–257 (VSTFSSGTSTTS) the composition is skewed to low complexity. Phosphoserine occurs at positions 328, 330, 333, 338, 344, 413, 542, 925, and 928. An interaction with Elongin BC complex region spans residues 333–342 (SLDSRSVSEI). Residues 439 to 922 (EALSEKEDVC…QETIKEKERK (484 aa)) are a coiled coil. The tract at residues 919-939 (KERKPFSVSSTPTMSRSSSIS) is disordered. A compositionally biased stretch (low complexity) spans 925-939 (SVSSTPTMSRSSSIS). At Thr929 the chain carries Phosphothreonine. Ser933 carries the post-translational modification Phosphoserine. Positions 984–1092 (SIIENLQSQL…QIDELLRQSL (109 aa)) form a coiled coil.

Interacts with TRNP1; may regulate TRNP1 proteasomal degradation. Component of the SNF/SWI transcription factor complexes. Interacts with RAB6A. Interacts with STAT3 and FER. Interacts with TCEB1. Post-translationally, phosphorylated by FER.

It localises to the cytoplasm. It is found in the nucleus. Its subcellular location is the golgi apparatus membrane. Functionally, potential coactivator of the androgen receptor. Mediates STAT3 degradation. May play critical roles in two RAB6-dependent retrograde transport processes: one from endosomes to the Golgi and the other from the Golgi to the ER. This protein binds the HIV-1 TATA element and inhibits transcriptional activation by the TATA-binding protein (TBP). The chain is TATA element modulatory factor (TMF1) from Homo sapiens (Human).